A 445-amino-acid polypeptide reads, in one-letter code: Phosphoglucosamine mutase (445 aa).

The active-site Phosphoserine intermediate is the Ser102. 4 residues coordinate Mg(2+): Ser102, Asp241, Asp243, and Asp245. Position 102 is a phosphoserine (Ser102).

It belongs to the phosphohexose mutase family. The cofactor is Mg(2+). Post-translationally, activated by phosphorylation.

It carries out the reaction alpha-D-glucosamine 1-phosphate = D-glucosamine 6-phosphate. Its function is as follows. Catalyzes the conversion of glucosamine-6-phosphate to glucosamine-1-phosphate. This is Phosphoglucosamine mutase from Haemophilus influenzae (strain PittEE).